Consider the following 386-residue polypeptide: Hydrazine synthase subunit beta (386 aa).

The signal sequence occupies residues 1-34 (MVIRRKMNKMIRKGMIGAVMLGAAVAISGGVATA).

As to quaternary structure, part of the hydrazine synthase complex that forms an elongated dimer of heterotrimers composed of one alpha, one beta and one gamma subunit.

The protein resides in the anammoxosome. The protein operates within nitrogen metabolism. Component of the hydrazine synthase complex that catalyzes the condensation of nitric oxide (NO) with ammonium to form hydrazine. The beta subunit may play a role in modulating transport of the hydroxylamine intermediate through a tunnel between the gamma and alpha subunit's active site. Is involved in anaerobic ammonium oxidation (anammox), a biological process in which nitrite is used as the electron acceptor in the conversion of ammonium to dinitrogen gas (N2) and water; this bacterial process has a major role in the Earth's nitrogen cycle and has been estimated to synthesize up to 50% of the dinitrogen gas emitted into our atmosphere from the oceans. The chain is Hydrazine synthase subunit beta from Kuenenia stuttgartiensis.